The primary structure comprises 215 residues: Mediator of RNA polymerase II transcription subunit 20 (215 aa).

This sequence belongs to the Mediator complex subunit 20 family. In terms of assembly, component of the Mediator complex.

Its subcellular location is the nucleus. Component of the Mediator complex, a coactivator involved in the regulated transcription of nearly all RNA polymerase II-dependent genes. Mediator functions as a bridge to convey information from gene-specific regulatory proteins to the basal RNA polymerase II transcription machinery. Mediator is recruited to promoters by direct interactions with regulatory proteins and serves as a scaffold for the assembly of a functional preinitiation complex with RNA polymerase II and the general transcription factors. This is Mediator of RNA polymerase II transcription subunit 20 (SRB2) from Candida glabrata (strain ATCC 2001 / BCRC 20586 / JCM 3761 / NBRC 0622 / NRRL Y-65 / CBS 138) (Yeast).